The following is a 425-amino-acid chain: [Pyruvate dehydrogenase (acetyl-transferring)] kinase, mitochondrial (425 aa).

Histidine 178 is subject to Phosphohistidine; by autocatalysis. One can recognise a Histidine kinase domain in the interval 180–418 (NVAVEIALDI…DVYIHLNRLC (239 aa)). ATP-binding positions include 296-303 (EILKNSLR), aspartate 336, 355-356 (TT), and 379-384 (GFGFGL).

Belongs to the PDK/BCKDK protein kinase family.

Its subcellular location is the mitochondrion matrix. The enzyme catalyses L-seryl-[pyruvate dehydrogenase E1 alpha subunit] + ATP = O-phospho-L-seryl-[pyruvate dehydrogenase E1 alpha subunit] + ADP + H(+). Functionally, inhibits the mitochondrial pyruvate dehydrogenase complex by phosphorylation of the E1 alpha subunit, thus contributing to the regulation of glucose metabolism. This is [Pyruvate dehydrogenase (acetyl-transferring)] kinase, mitochondrial (pkp1) from Schizosaccharomyces pombe (strain 972 / ATCC 24843) (Fission yeast).